The following is a 209-amino-acid chain: Orotate phosphoribosyltransferase (209 aa).

Residues arginine 96, lysine 100, histidine 102, and 122–130 each bind 5-phospho-alpha-D-ribose 1-diphosphate; that span reads EDLISTGGS. Serine 126 contacts orotate.

This sequence belongs to the purine/pyrimidine phosphoribosyltransferase family. PyrE subfamily. Homodimer. Mg(2+) is required as a cofactor.

The catalysed reaction is orotidine 5'-phosphate + diphosphate = orotate + 5-phospho-alpha-D-ribose 1-diphosphate. Its pathway is pyrimidine metabolism; UMP biosynthesis via de novo pathway; UMP from orotate: step 1/2. Functionally, catalyzes the transfer of a ribosyl phosphate group from 5-phosphoribose 1-diphosphate to orotate, leading to the formation of orotidine monophosphate (OMP). The sequence is that of Orotate phosphoribosyltransferase from Streptococcus pyogenes serotype M2 (strain MGAS10270).